We begin with the raw amino-acid sequence, 634 residues long: Kelch-like protein 31 (634 aa).

Position 2 is a n,N,N-trimethylalanine (Ala2). The BTB domain occupies 73–137 (CDLVIGTKTK…AYTGKLTLSL (65 aa)). In terms of domain architecture, BACK spans 172–273 (CMYVVNIAET…SAQDLVNYVQ (102 aa)). 6 Kelch repeats span residues 317-365 (VLVT…VMDG), 366-419 (FLYV…VFNG), 420-466 (LVYA…VADG), 468-513 (VLVT…TLSD), 515-565 (VYVM…ALHG), and 567-614 (AYLV…TLSM).

N-terminus is methylated by METTL11A/NTM1. Strongly expressed in skeletal muscle and weakly in heart. According to PubMed:15302408, not expressed in other tissues. According to PubMed:18719355, abundantly expressed in both embryonic skeletal and heart tissues.

Functionally, transcriptional repressor in MAPK/JNK signaling pathway to regulate cellular functions. Overexpression inhibits the transcriptional activities of both the TPA-response element (TRE) and serum response element (SRE). This Homo sapiens (Human) protein is Kelch-like protein 31 (KLHL31).